The sequence spans 656 residues: Protein EMBRYO SAC DEVELOPMENT ARREST 30 (656 aa).

A helical; Signal-anchor for type II membrane protein transmembrane segment spans residues 9-29 (WIALFVLILSMGSLVVHLSMT). N-linked (GlcNAc...) asparagine glycosylation is present at Asn-119. Residues 381 to 426 (LSELVGPETPLPENTYKMPPRKSDKQLKEEWNKAGPRPRPLPPPPD) form a disordered region. Over residues 401-412 (RKSDKQLKEEWN) the composition is skewed to basic and acidic residues. The span at 417-426 (RPRPLPPPPD) shows a compositional bias: pro residues. Asn-444, Asn-522, Asn-534, and Asn-544 each carry an N-linked (GlcNAc...) asparagine glycan. Residues 631–656 (SETEEEFAKSKVASAFDQDEEWDPND) are disordered. Over residues 647–656 (DQDEEWDPND) the composition is skewed to acidic residues.

This sequence belongs to the glycosyltransferase GT106 family.

It is found in the membrane. It functions in the pathway glycan metabolism. The polypeptide is Protein EMBRYO SAC DEVELOPMENT ARREST 30 (Arabidopsis thaliana (Mouse-ear cress)).